A 61-amino-acid chain; its full sequence is Large ribosomal subunit protein uL30 (61 aa).

Belongs to the universal ribosomal protein uL30 family. As to quaternary structure, part of the 50S ribosomal subunit.

In Shewanella piezotolerans (strain WP3 / JCM 13877), this protein is Large ribosomal subunit protein uL30.